Consider the following 103-residue polypeptide: Large ribosomal subunit protein uL24 (103 aa).

It belongs to the universal ribosomal protein uL24 family. As to quaternary structure, part of the 50S ribosomal subunit.

Functionally, one of two assembly initiator proteins, it binds directly to the 5'-end of the 23S rRNA, where it nucleates assembly of the 50S subunit. Its function is as follows. One of the proteins that surrounds the polypeptide exit tunnel on the outside of the subunit. The sequence is that of Large ribosomal subunit protein uL24 from Pasteurella multocida (strain Pm70).